Reading from the N-terminus, the 155-residue chain is MDELKHQVMINQFVLTAGCAADQAKQLLQAAHWQFETALSAFFQETNIPYGHHHQMMCTPANTPATPPNFPDALTMFSRLKASESFNSSSSPSMATSPPPPPVSWGMAPPMANQQSLWTQGPSAQQTHPPPGWPSAVNQQAASEQKASAAMEAER.

A disordered region spans residues 81-155; sequence KASESFNSSS…KASAAMEAER (75 aa). Positions 83 to 96 are enriched in low complexity; that stretch reads SESFNSSSSPSMAT. Over residues 112-127 the composition is skewed to polar residues; the sequence is ANQQSLWTQGPSAQQT. Residues 139-155 show a composition bias toward low complexity; the sequence is QQAASEQKASAAMEAER.

It belongs to the UBALD family.

This chain is UBA-like domain-containing protein 1 (ubald1), found in Danio rerio (Zebrafish).